Consider the following 194-residue polypeptide: MNLMTTITGVVLAGGKARRMGGVDKGLLDLNGKPLWQHVADALMTQLSHVVVNANRHQEIYQAGGLKVIEDSLADYPGPLAGMLSVMQQEAGEWFLFCPCDTPYIPHDLAARLNHQRKDAPVVWVHDGERDHPTIAMVNRAIEPLLLEYLQAGERRVMAFMRLAGGHAVDFSDHKDAFVNVNTPEELARWQEKR.

GTP is bound by residues 12–14 (LAG), Lys25, Asn53, Asp71, and Asp101. Position 101 (Asp101) interacts with Mg(2+).

It belongs to the MobA family. In terms of assembly, monomer. Mg(2+) serves as cofactor.

The protein localises to the cytoplasm. It catalyses the reaction Mo-molybdopterin + GTP + H(+) = Mo-molybdopterin guanine dinucleotide + diphosphate. Functionally, transfers a GMP moiety from GTP to Mo-molybdopterin (Mo-MPT) cofactor (Moco or molybdenum cofactor) to form Mo-molybdopterin guanine dinucleotide (Mo-MGD) cofactor. The chain is Molybdenum cofactor guanylyltransferase from Escherichia coli O157:H7.